A 276-amino-acid polypeptide reads, in one-letter code: NADPH-dependent 7-cyano-7-deazaguanine reductase (276 aa).

83–85 contacts substrate; that stretch reads IES. An NADPH-binding site is contributed by 85-86; that stretch reads SK. Cys184 functions as the Thioimide intermediate in the catalytic mechanism. Asp191 (proton donor) is an active-site residue. A substrate-binding site is contributed by 223–224; that stretch reads HE. 252–253 contacts NADPH; the sequence is RG.

It belongs to the GTP cyclohydrolase I family. QueF type 2 subfamily. Homodimer.

Its subcellular location is the cytoplasm. It carries out the reaction 7-aminomethyl-7-carbaguanine + 2 NADP(+) = 7-cyano-7-deazaguanine + 2 NADPH + 3 H(+). It functions in the pathway tRNA modification; tRNA-queuosine biosynthesis. In terms of biological role, catalyzes the NADPH-dependent reduction of 7-cyano-7-deazaguanine (preQ0) to 7-aminomethyl-7-deazaguanine (preQ1). The chain is NADPH-dependent 7-cyano-7-deazaguanine reductase from Pseudomonas putida (strain ATCC 47054 / DSM 6125 / CFBP 8728 / NCIMB 11950 / KT2440).